A 484-amino-acid polypeptide reads, in one-letter code: Poly(A) RNA polymerase GLD2 (484 aa).

Phosphoserine occurs at positions 62 and 69. The segment at 72 to 97 (FRGRKRLSDEKNLPLDGKRQRFHSPH) is disordered. The Nuclear localization signal signature appears at 76–92 (KRLSDEKNLPLDGKRQR). Positions 77–90 (RLSDEKNLPLDGKR) are enriched in basic and acidic residues. Residue S95 is modified to Phosphoserine. Mg(2+)-binding residues include D213 and D215. The region spanning 386-440 (NLGDLLLGFLKYYATEFDWNSQMISVREAKAIPRPDGIEWRNKYICVEEPFDGTN) is the PAP-associated domain.

The protein belongs to the DNA polymerase type-B-like family. GLD2 subfamily. In terms of assembly, interacts with CPEB1, CPEB2, CPSF1 and PABPC1. Interacts with QKI isoform QKI7; promoting recruitment to miRNA miR-122 and miR-122 stabilization. Mg(2+) serves as cofactor. The cofactor is Mn(2+). As to expression, expressed in brain. Within brain, it is expressed in cerebellum, hippocampus and medulla.

The protein localises to the cytoplasm. It is found in the nucleus. The enzyme catalyses RNA(n) + ATP = RNA(n)-3'-adenine ribonucleotide + diphosphate. Its function is as follows. Cytoplasmic poly(A) RNA polymerase that adds successive AMP monomers to the 3'-end of specific RNAs, forming a poly(A) tail. In contrast to the canonical nuclear poly(A) RNA polymerase, it only adds poly(A) to selected cytoplasmic mRNAs. Does not play a role in replication-dependent histone mRNA degradation. Adds a single nucleotide to the 3' end of specific miRNAs, monoadenylation stabilizes and prolongs the activity of some but not all miRNAs. This is Poly(A) RNA polymerase GLD2 from Homo sapiens (Human).